The following is a 612-amino-acid chain: tRNA(Met) cytidine acetyltransferase TmcA (612 aa).

Residues glutamine 136, 161–170, and arginine 284 contribute to the ATP site; that span reads GRGKSTLLGQ. An N-acetyltransferase domain is found at 319 to 499; that stretch reads KHASELEEAL…PAAIYALPLT (181 aa). 424 to 426 serves as a coordination point for acetyl-CoA; the sequence is IAV.

Belongs to the RNA cytidine acetyltransferase family. TmcA subfamily.

It is found in the cytoplasm. The enzyme catalyses cytidine(34) in elongator tRNA(Met) + acetyl-CoA + ATP + H2O = N(4)-acetylcytidine(34) in elongator tRNA(Met) + ADP + phosphate + CoA + H(+). Catalyzes the formation of N(4)-acetylcytidine (ac(4)C) at the wobble position of tRNA(Met), by using acetyl-CoA as an acetyl donor and ATP (or GTP). The polypeptide is tRNA(Met) cytidine acetyltransferase TmcA (Idiomarina loihiensis (strain ATCC BAA-735 / DSM 15497 / L2-TR)).